Reading from the N-terminus, the 614-residue chain is Bifunctional 3'-phosphoadenosine 5'-phosphosulfate synthase 2 (614 aa).

The segment at 1–215 is adenylyl-sulfate kinase; the sequence is MSGIKKQKTE…VVELLQEQNI (215 aa). Position 52–57 (52–57) interacts with ATP; sequence GAGKTT. Adenosine 5'-phosphosulfate contacts are provided by residues 79–82, Phe91, 96–99, 122–123, Lys161, and 174–175; these read DNVR, REEN, IS, and GF. Residues Ser197, 409-412, 511-515, and Ala553 each bind ATP; these read QLRN and GRDPA. Residues 224–614 are sulfate adenylyltransferase; that stretch reads IHELFVPENK…TDYYRSLEKN (391 aa).

The protein in the N-terminal section; belongs to the APS kinase family. This sequence in the C-terminal section; belongs to the sulfate adenylyltransferase family. As to expression, expressed in cartilage and adrenal gland.

It carries out the reaction sulfate + ATP + H(+) = adenosine 5'-phosphosulfate + diphosphate. It catalyses the reaction adenosine 5'-phosphosulfate + ATP = 3'-phosphoadenylyl sulfate + ADP + H(+). It functions in the pathway sulfur metabolism; sulfate assimilation. Bifunctional enzyme with both ATP sulfurylase and APS kinase activity, which mediates two steps in the sulfate activation pathway. The first step is the transfer of a sulfate group to ATP to yield adenosine 5'-phosphosulfate (APS), and the second step is the transfer of a phosphate group from ATP to APS yielding 3'-phosphoadenylylsulfate/PAPS, the activated sulfate donor used by sulfotransferases. In mammals, PAPS is the sole source of sulfate while APS appears to only be an intermediate in the sulfate-activation pathway. Plays indirectly an important role in skeletogenesis during postnatal growth. The polypeptide is Bifunctional 3'-phosphoadenosine 5'-phosphosulfate synthase 2 (PAPSS2) (Homo sapiens (Human)).